Consider the following 912-residue polypeptide: LPS-assembly protein LptD (912 aa).

A signal peptide spans 1-27; that stretch reads MLYSPLYQSIRLILFGALGLSSLTVSA.

Belongs to the LptD family. Component of the lipopolysaccharide transport and assembly complex. Interacts with LptE and LptA.

It is found in the cell outer membrane. Its function is as follows. Together with LptE, is involved in the assembly of lipopolysaccharide (LPS) at the surface of the outer membrane. The protein is LPS-assembly protein LptD of Psychrobacter arcticus (strain DSM 17307 / VKM B-2377 / 273-4).